Reading from the N-terminus, the 121-residue chain is Small ribosomal subunit protein uS13 (121 aa).

Positions 96-121 (PVRGQNTKNNARTRKGKAVAIAGKKK) are disordered. Residues 106 to 121 (ARTRKGKAVAIAGKKK) show a composition bias toward basic residues.

This sequence belongs to the universal ribosomal protein uS13 family. As to quaternary structure, part of the 30S ribosomal subunit. Forms a loose heterodimer with protein S19. Forms two bridges to the 50S subunit in the 70S ribosome.

In terms of biological role, located at the top of the head of the 30S subunit, it contacts several helices of the 16S rRNA. In the 70S ribosome it contacts the 23S rRNA (bridge B1a) and protein L5 of the 50S subunit (bridge B1b), connecting the 2 subunits; these bridges are implicated in subunit movement. Contacts the tRNAs in the A and P-sites. The protein is Small ribosomal subunit protein uS13 of Streptococcus pyogenes serotype M3 (strain SSI-1).